We begin with the raw amino-acid sequence, 175 residues long: Ribosome maturation factor RimM (175 aa).

Residues 97–170 (NGQYYWTDVL…YLYVDWQMAW (74 aa)) form the PRC barrel domain.

This sequence belongs to the RimM family. In terms of assembly, binds ribosomal protein uS19.

The protein resides in the cytoplasm. In terms of biological role, an accessory protein needed during the final step in the assembly of 30S ribosomal subunit, possibly for assembly of the head region. Essential for efficient processing of 16S rRNA. May be needed both before and after RbfA during the maturation of 16S rRNA. It has affinity for free ribosomal 30S subunits but not for 70S ribosomes. This chain is Ribosome maturation factor RimM, found in Dichelobacter nodosus (strain VCS1703A).